The sequence spans 202 residues: Small ribosomal subunit protein uS4 (202 aa).

Residues 91–168 enclose the S4 RNA-binding domain; that stretch reads SRLSSILYNS…HKVPDYLEVD (78 aa).

It belongs to the universal ribosomal protein uS4 family. Part of the 30S ribosomal subunit. Contacts protein S5. The interaction surface between S4 and S5 is involved in control of translational fidelity.

Functionally, one of the primary rRNA binding proteins, it binds directly to 16S rRNA where it nucleates assembly of the body of the 30S subunit. Its function is as follows. With S5 and S12 plays an important role in translational accuracy. This Ehrlichia canis (strain Jake) protein is Small ribosomal subunit protein uS4.